The sequence spans 317 residues: Putative 2-hydroxyacid dehydrogenase SAOUHSC_02577 (317 aa).

NAD(+)-binding positions include 155–156 (EI), 234–236 (ASR), and Asp-260. The active site involves Arg-236. Glu-265 is an active-site residue. Catalysis depends on His-283, which acts as the Proton donor. Residue 283–286 (HIGN) coordinates NAD(+).

It belongs to the D-isomer specific 2-hydroxyacid dehydrogenase family.

The sequence is that of Putative 2-hydroxyacid dehydrogenase SAOUHSC_02577 from Staphylococcus aureus (strain NCTC 8325 / PS 47).